Here is a 160-residue protein sequence, read N- to C-terminus: Ribonuclease ARB_07070 (160 aa).

An N-terminal signal peptide occupies residues 1-18 (MVSFKAILTLSLIGAAFA). The segment at 26 to 51 (AEPVEDSGAVANSPEGSGMDLGGTDP) is disordered. Residue E103 is the Proton acceptor of the active site. H144 serves as the catalytic Proton donor.

It belongs to the ribonuclease U2 family.

It is found in the secreted. Its function is as follows. This purine-specific ribonuclease cleaves 28S RNA in eukaryotic ribosomes, inhibits protein synthesis, and shows antitumor activity. The polypeptide is Ribonuclease ARB_07070 (Arthroderma benhamiae (strain ATCC MYA-4681 / CBS 112371) (Trichophyton mentagrophytes)).